A 387-amino-acid polypeptide reads, in one-letter code: ERBB-3 BINDING PROTEIN 1 (387 aa).

Necessary for nucleolar localization stretches follow at residues 1-49 (MSDD…IVDL) and 297-387 (LLQP…PMEG). The interval 47–55 (VDLCEKGDA) is RNA-binding. A disordered region spans residues 337-387 (LQPTKTTENEPEIKAWLALPTKTKKKGGGKKKKGKKGDKVEEASQAEPMEG). The segment at 356 to 373 (PTKTKKKGGGKKKKGKKG) is interaction with RNA. Positions 358-372 (KTKKKGGGKKKKGKK) are enriched in basic residues. Positions 360 to 369 (KKKGGGKKKK) match the Nuclear localization signal motif.

It belongs to the peptidase M24 family. Component of a ribonucleoprotein complex. In terms of tissue distribution, expressed during tuberisation and in roots, nodes, internodes, petioles, leaves, stolons, tubers and sprouts.

It localises to the nucleus. Binds RNA. Associates with 28S, 18S and 5.8S mature rRNAs, several rRNA precursors and probably U3 small nucleolar RNA. May be involved in regulation of intermediate and late steps of rRNA processing. May be involved in ribosome assembly. Required for expression of cell cycle genes such as CYCD3-1, RNR2A and CDKB1-1. Promotes, in a dose- and auxin-dependent manner, organ growth by stimulating both cell proliferation and expansion, via the regulation of RBR1 levels. This chain is ERBB-3 BINDING PROTEIN 1, found in Solanum tuberosum (Potato).